Here is a 438-residue protein sequence, read N- to C-terminus: 23S rRNA (uracil(1939)-C(5))-methyltransferase RlmD (438 aa).

Positions 10–69 (KASVNTKHLSVDVVRLDHNGAGIAFVDKKPVFIEGALPGEKAIIQFIEQKKQFSRAKLIK) constitute a TRAM domain. [4Fe-4S] cluster-binding residues include Cys-82, Cys-88, Cys-91, and Cys-169. S-adenosyl-L-methionine contacts are provided by Gln-272, Phe-301, Asn-306, Glu-322, Asn-349, and Asp-370. Cys-396 acts as the Nucleophile in catalysis.

The protein belongs to the class I-like SAM-binding methyltransferase superfamily. RNA M5U methyltransferase family. RlmD subfamily.

The enzyme catalyses uridine(1939) in 23S rRNA + S-adenosyl-L-methionine = 5-methyluridine(1939) in 23S rRNA + S-adenosyl-L-homocysteine + H(+). Catalyzes the formation of 5-methyl-uridine at position 1939 (m5U1939) in 23S rRNA. This Aliivibrio fischeri (strain MJ11) (Vibrio fischeri) protein is 23S rRNA (uracil(1939)-C(5))-methyltransferase RlmD.